Consider the following 96-residue polypeptide: Putative regulatory protein Teth514_1762 (96 aa).

It belongs to the RemA family.

The sequence is that of Putative regulatory protein Teth514_1762 from Thermoanaerobacter sp. (strain X514).